A 101-amino-acid chain; its full sequence is Urease subunit beta (101 aa).

The protein belongs to the urease beta subunit family. Heterotrimer of UreA (gamma), UreB (beta) and UreC (alpha) subunits. Three heterotrimers associate to form the active enzyme.

It is found in the cytoplasm. The catalysed reaction is urea + 2 H2O + H(+) = hydrogencarbonate + 2 NH4(+). It functions in the pathway nitrogen metabolism; urea degradation; CO(2) and NH(3) from urea (urease route): step 1/1. The polypeptide is Urease subunit beta (Dinoroseobacter shibae (strain DSM 16493 / NCIMB 14021 / DFL 12)).